The following is a 322-amino-acid chain: Ribonuclease Z (322 aa).

Positions 62, 64, 66, 67, 139, 210, and 268 each coordinate Zn(2+). Asp-66 (proton acceptor) is an active-site residue.

Belongs to the RNase Z family. In terms of assembly, homodimer. The cofactor is Zn(2+).

It carries out the reaction Endonucleolytic cleavage of RNA, removing extra 3' nucleotides from tRNA precursor, generating 3' termini of tRNAs. A 3'-hydroxy group is left at the tRNA terminus and a 5'-phosphoryl group is left at the trailer molecule.. Zinc phosphodiesterase, which displays some tRNA 3'-processing endonuclease activity. Probably involved in tRNA maturation, by removing a 3'-trailer from precursor tRNA. The chain is Ribonuclease Z from Nostoc sp. (strain PCC 7120 / SAG 25.82 / UTEX 2576).